Consider the following 505-residue polypeptide: Kinesin light chain 3 (505 aa).

The segment at 1-20 (MSVQVAAPGGLGLGLERPSP) is disordered. A coiled-coil region spans residues 88–150 (LLALSAHVGA…EEEKSHLEFL (63 aa)). A disordered region spans residues 157–193 (DPPAESQQPESPPRRDSLASLFPSEEEERRGPEAVGA). S173 carries the post-translational modification Phosphoserine. 5 TPR repeats span residues 207-240 (LRTL…LERS), 249-282 (ATML…REQT), 291-324 (AATL…REKV), 333-366 (AKQL…YEAL), and 375-408 (AKTK…EALP). The interval 409–505 (APLGAPNTGT…STSTQDLGPR (97 aa)) is disordered. A compositionally biased stretch (low complexity) spans 416–434 (TGTTSDTQQQTLSRSSSFS). The span at 435-453 (KLRESIRRGSEKLVSRLRG) shows a compositional bias: basic and acidic residues. Phosphoserine is present on S467. Over residues 489 to 505 (SEASRTLSTSTQDLGPR) the composition is skewed to polar residues. T499 carries the phosphothreonine modification.

It belongs to the kinesin light chain family. In terms of assembly, oligomer composed of two heavy chains and two light chains. Associates with microtubulin in an ATP-dependent manner. Interacts with KIF5C. Interacts with ODF1. Interacts with LRGUK. Interacts with VDAC2.

The protein localises to the cytoplasm. It localises to the cytoskeleton. It is found in the mitochondrion. Functionally, kinesin is a microtubule-associated force-producing protein that may play a role in organelle transport. Plays a role during spermiogenesis in the development of the sperm tail midpiece and in the normal function of spermatozoa. May play a role in the formation of the mitochondrial sheath formation in the developing spermatid midpiece. The sequence is that of Kinesin light chain 3 (KLC3) from Bos taurus (Bovine).